A 231-amino-acid chain; its full sequence is Eukaryotic translation initiation factor 4E-1 (231 aa).

EIF4G-binding stretches follow at residues 56–59 (HPLE) and 66–102 (FDNPTTKSRQTAWGSSLRNVYTFSTVEDFWGAYNNIH). Residues 74-79 (RQTAWG), Lys106, and 124-125 (WE) each bind mRNA. The cysteines at positions 129 and 167 are disulfide-linked. The interval 150 to 159 (YTLLAMIGHQ) is EIF4G-binding. Residues 174-179 (RAKGEK) and 219-223 (KRLDR) each bind mRNA.

The protein belongs to the eukaryotic initiation factor 4E family. As to quaternary structure, EIF4F is a multi-subunit complex, the composition of which varies with external and internal environmental conditions. It is composed of at least EIF4A, EIF4E and EIF4G. EIF4E is also known to interact with other partners. In higher plants two isoforms of EIF4F have been identified, named isoform EIF4F and isoform EIF(iso)4F. Isoform EIF4F has subunits p220 and p26, whereas isoform EIF(iso)4F has subunits p82 and p28. In terms of assembly, (Microbial infection) Interacts with potyvirus viral genome-linked protein (VPg); mostly with tobacco etch virus (TEV-HAT) VPg and, to a lower extent, with potato virus Y (PVY-LYE84 and PVY-LYE90) and pepper mottle virus (PepMoV) VPg. According to the redox status, the Cys-129-Cys-167 disulfide bridge may have a role in regulating protein function by affecting its ability to bind capped mRNA.

It is found in the nucleus. It localises to the cytoplasm. Functionally, component of the protein complex eIF4F, which is involved in the recognition of the mRNA cap, ATP-dependent unwinding of 5'-terminal secondary structure and recruitment of mRNA to the ribosome. Recognizes and binds the 7-methylguanosine-containing mRNA cap during an early step in the initiation of protein synthesis and facilitates ribosome binding by inducing the unwinding of the mRNAs secondary structures. Key component of recessive resistance to potyviruses. Its function is as follows. (Microbial infection) Susceptibility host factor required for viral infection (e.g. potato virus Y (PVY), pepper mottle virus (PepMoV) and tobacco etch virus (TEV)) by recruiting viral RNAs to the host ribosomal complex via an interaction with viral genome-linked protein (VPg). The polypeptide is Eukaryotic translation initiation factor 4E-1 (Solanum lycopersicum (Tomato)).